Here is a 498-residue protein sequence, read N- to C-terminus: ATP synthase subunit beta, chloroplastic (498 aa).

172–179 contacts ATP; sequence GGAGVGKT.

The protein belongs to the ATPase alpha/beta chains family. F-type ATPases have 2 components, CF(1) - the catalytic core - and CF(0) - the membrane proton channel. CF(1) has five subunits: alpha(3), beta(3), gamma(1), delta(1), epsilon(1). CF(0) has four main subunits: a(1), b(1), b'(1) and c(9-12).

The protein localises to the plastid. Its subcellular location is the chloroplast thylakoid membrane. The enzyme catalyses ATP + H2O + 4 H(+)(in) = ADP + phosphate + 5 H(+)(out). Its function is as follows. Produces ATP from ADP in the presence of a proton gradient across the membrane. The catalytic sites are hosted primarily by the beta subunits. This Calycanthus floridus (Eastern sweetshrub) protein is ATP synthase subunit beta, chloroplastic.